Consider the following 962-residue polypeptide: Glycine dehydrogenase (decarboxylating) (962 aa).

N6-(pyridoxal phosphate)lysine is present on Lys-709.

It belongs to the GcvP family. In terms of assembly, the glycine cleavage system is composed of four proteins: P, T, L and H. Pyridoxal 5'-phosphate is required as a cofactor.

The enzyme catalyses N(6)-[(R)-lipoyl]-L-lysyl-[glycine-cleavage complex H protein] + glycine + H(+) = N(6)-[(R)-S(8)-aminomethyldihydrolipoyl]-L-lysyl-[glycine-cleavage complex H protein] + CO2. The glycine cleavage system catalyzes the degradation of glycine. The P protein binds the alpha-amino group of glycine through its pyridoxal phosphate cofactor; CO(2) is released and the remaining methylamine moiety is then transferred to the lipoamide cofactor of the H protein. This is Glycine dehydrogenase (decarboxylating) from Shewanella amazonensis (strain ATCC BAA-1098 / SB2B).